The primary structure comprises 653 residues: Protein CBFA2T3 (653 aa).

The segment covering 1 to 10 (MPASRLRDRA) has biased composition (basic and acidic residues). Positions 1–109 (MPASRLRDRA…HTHREDGPAT (109 aa)) are disordered. The tract at residues 1–127 (MPASRLRDRA…CLKWSMVCLL (127 aa)) is required for nucleolar targeting (in isoform 1). Positions 1–430 (MPASRLRDRA…RRCQEADREE (430 aa)) are mediates interaction with PDE7A (in isoform 2). The segment at 1 to 435 (MPASRLRDRA…ADREELNHWA (435 aa)) is mediates localization to the nucleus. Residues 11–23 (ASSASGSTCGSMS) show a composition bias toward low complexity. Over residues 75–86 (STPPSMPPPPPA) the composition is skewed to pro residues. The interaction with ZBTB33 stretch occupies residues 145 to 242 (PNGFSNGPAT…IPFLKANLPL (98 aa)). The TAFH domain occupies 171-266 (ARQLSKLKRF…TPAQYLAQHE (96 aa)). Positions 176–268 (KLKRFLTTLQ…AQYLAQHEQL (93 aa)) are interaction with HIF1A. The segment at 284–342 (LLEVNENGKRRTPDRTKENGSDRDPLHPEHLSKRPCTLNPAQRYSPSNGPPQPTPPPHY) is disordered. Positions 289-315 (ENGKRRTPDRTKENGSDRDPLHPEHLS) are enriched in basic and acidic residues. A compositionally biased stretch (pro residues) spans 331-341 (NGPPQPTPPPH). Residues 394–412 (EEWKHLNNLLNCIMDMVEK) form a nervy homology region 2 (NHR2); essential for down-regulation of PFKFB3, PFKFB4 and PDK1 expression region. Positions 434–446 (WARRYSDAEDTKK) are enriched in basic and acidic residues. The segment at 434 to 472 (WARRYSDAEDTKKGPAPAAARPRSSSAGPEGPQLDVPRE) is disordered. Positions 447-462 (GPAPAAARPRSSSAGP) are enriched in low complexity. Phosphoserine occurs at positions 457 and 459. Threonine 479 carries the post-translational modification Phosphothreonine. The interval 485–506 (DIWRKAEEAVNEVKRQAMSELQ) is mediates interaction with PRKAR2A. Positions 485-533 (DIWRKAEEAVNEVKRQAMSELQKAVSDAERKAHELITTERAKMERALAE) are nervy homology region 3 (NHR3); essential for down-regulation of PFKFB3, PFKFB4 and PDK1 expression. Residues 488-543 (RKAEEAVNEVKRQAMSELQKAVSDAERKAHELITTERAKMERALAEAKRQASEDAL) are a coiled coil. The Zn(2+) site is built by cysteine 556, cysteine 559, cysteine 567, cysteine 570, cysteine 576, cysteine 580, histidine 588, and cysteine 592. The segment at 556-592 (CWNCGRKASETCSGCNAARYCGSFCQHRDWEKHHHVC) adopts an MYND-type zinc-finger fold. The disordered stretch occupies residues 603–653 (VADPVPGPPEAAHSLGPSLPVGAASPSEAGSAGPSRPGSPSPPGPLDTVPR). Positions 622–638 (PVGAASPSEAGSAGPSR) are enriched in low complexity. 2 positions are modified to phosphoserine: serine 637 and serine 641. Threonine 650 carries the phosphothreonine modification.

Belongs to the CBFA2T family. Homooligomer. Homotetramerization is mediated by nervy homology region 2 (NRH2). Can interact with RUNX1T1 and CBFA2T2; heterotetramerization between members of the CBFA2T family is proposed. Component of a TAL-1 complex composed at least of CBFA2T3, LDB1, TAL1 and TCF3. Interacts with ERBB4, HDAC1, HDAC2, HDAC3, HDAC6, HDAC8, NCOR1, NCOR2, and ZNF652. According to PubMed:12242670, may not interact with HDAC6. Interacts with PLXNA1, PLXNA3 and PRKAR1A. Isoform 2 interacts with PRKAR2A, PDE7A and probably PDE4A. Interacts with ZBTB4, ZBTB38 and ZBTB33. Interacts with HIF1A and EGLN1. Interacts with the AML1-MTG8/ETO fusion protein. As to expression, widely expressed with higher expression in heart, pancreas, skeletal muscle, spleen, thymus and peripheral blood leukocytes. Expressed in hematopoietic cells (at protein level).

Its subcellular location is the nucleus. The protein resides in the nucleolus. It is found in the nucleoplasm. It localises to the golgi apparatus membrane. In terms of biological role, transcriptional corepressor which facilitates transcriptional repression via its association with DNA-binding transcription factors and recruitment of other corepressors and histone-modifying enzymes. Can repress the expression of MMP7 in a ZBTB33-dependent manner. Reduces the protein levels and stability of the transcriptinal regulator HIF1A; interacts with EGLN1 and promotes the HIF1A prolyl hydroxylation-dependent ubiquitination and proteasomal degradation pathway. Contributes to inhibition of glycolysis and stimulation of mitochondrial respiration by down-regulating the expression of glycolytic genes including PFKFB3, PFKFB4, PDK1, PFKP, LDHA and HK1 which are direct targets of HIF1A. Regulates the proliferation and the differentiation of erythroid progenitors by repressing the expression of TAL1 target genes. Plays a role in granulocyte differentiation. Functionally, isoform 2 functions as an A-kinase-anchoring protein. This is Protein CBFA2T3 (CBFA2T3) from Homo sapiens (Human).